A 466-amino-acid chain; its full sequence is Asparagine--tRNA ligase (466 aa).

This sequence belongs to the class-II aminoacyl-tRNA synthetase family. As to quaternary structure, homodimer.

Its subcellular location is the cytoplasm. The enzyme catalyses tRNA(Asn) + L-asparagine + ATP = L-asparaginyl-tRNA(Asn) + AMP + diphosphate + H(+). This chain is Asparagine--tRNA ligase, found in Psychromonas ingrahamii (strain DSM 17664 / CCUG 51855 / 37).